The chain runs to 106 residues: Synaptic plasticity regulator PANTS (106 aa).

The disordered stretch occupies residues 67–106; that stretch reads LQQSEKTRLEGKQNNSPVWTLRKNPPPDWYLPLDPGKPRQ.

This sequence belongs to the UPF0545 family. In terms of processing, rapidly degraded by proteolysis following neuronal stimulation, resulting in increased AMPA receptor clustering.

The protein localises to the synapse. It localises to the synaptic cleft. Functionally, negatively regulates long-term potentiation and modulates adult synaptic plasticity. The protein is Synaptic plasticity regulator PANTS of Xenopus laevis (African clawed frog).